The chain runs to 216 residues: MRVAIIDYGSGNLRSATKAFERAAHESGISAEIDLTCDAQRVASADRIVLPGVGAYADCRRGLDAAPGMVEALNDTVLKKARPFLGICVGMQLMSERGLEKTVTNGLGWIAGDVREMVPSDASLKIPQIGWNRIHVKHSHPIFDGIPTGDDGLHAYFVHSYMLDAKNASDVLAVTDYGGDVTAAVGRDNMVGTQFHPEKSQLLGLSLIANFLKWKP.

One can recognise a Glutamine amidotransferase type-1 domain in the interval 2-216 (RVAIIDYGSG…LIANFLKWKP (215 aa)). The active-site Nucleophile is Cys88. Active-site residues include His196 and Glu198.

Heterodimer of HisH and HisF.

The protein resides in the cytoplasm. The catalysed reaction is 5-[(5-phospho-1-deoxy-D-ribulos-1-ylimino)methylamino]-1-(5-phospho-beta-D-ribosyl)imidazole-4-carboxamide + L-glutamine = D-erythro-1-(imidazol-4-yl)glycerol 3-phosphate + 5-amino-1-(5-phospho-beta-D-ribosyl)imidazole-4-carboxamide + L-glutamate + H(+). It catalyses the reaction L-glutamine + H2O = L-glutamate + NH4(+). It functions in the pathway amino-acid biosynthesis; L-histidine biosynthesis; L-histidine from 5-phospho-alpha-D-ribose 1-diphosphate: step 5/9. Functionally, IGPS catalyzes the conversion of PRFAR and glutamine to IGP, AICAR and glutamate. The HisH subunit catalyzes the hydrolysis of glutamine to glutamate and ammonia as part of the synthesis of IGP and AICAR. The resulting ammonia molecule is channeled to the active site of HisF. In Brucella abortus biovar 1 (strain 9-941), this protein is Imidazole glycerol phosphate synthase subunit HisH.